Consider the following 89-residue polypeptide: Small ribosomal subunit protein uS15 (89 aa).

It belongs to the universal ribosomal protein uS15 family. Part of the 30S ribosomal subunit. Forms a bridge to the 50S subunit in the 70S ribosome, contacting the 23S rRNA.

In terms of biological role, one of the primary rRNA binding proteins, it binds directly to 16S rRNA where it helps nucleate assembly of the platform of the 30S subunit by binding and bridging several RNA helices of the 16S rRNA. Its function is as follows. Forms an intersubunit bridge (bridge B4) with the 23S rRNA of the 50S subunit in the ribosome. The protein is Small ribosomal subunit protein uS15 of Nostoc sp. (strain PCC 7120 / SAG 25.82 / UTEX 2576).